The sequence spans 973 residues: ATP-dependent DNA helicase homolog RECG1, chloroplastic/mitochondrial (973 aa).

The tract at residues 1–208 (MAAVTLSPCS…ATSEVEATSD (208 aa)) is sufficient for chloroplastic and mitochondrial trgeting. The segment at 174–200 (LLQNDDSSDPREDILDDGSSFTSKTAT) is disordered. The Helicase ATP-binding domain occupies 536 to 725 (DLKRPVPMNR…LYGDISLTQI (190 aa)). ATP is bound at residue 549–556 (GDVGCGKT). The DEQQ box signature appears at 655-658 (DEQQ). Positions 746–904 (GIKEVYSMML…GFYLANIDLL (159 aa)) constitute a Helicase C-terminal domain.

Belongs to the helicase family. RecG subfamily. Expressed in most tissues, not seen in pollen, ovules or developing seeds.

The protein resides in the plastid. Its subcellular location is the chloroplast. It localises to the mitochondrion. It catalyses the reaction Couples ATP hydrolysis with the unwinding of duplex DNA by translocating in the 3'-5' direction.. The enzyme catalyses ATP + H2O = ADP + phosphate + H(+). Its function is as follows. Plays a critical role in recombination and DNA repair. Helps process Holliday junction (HJ) intermediates to mature products by catalyzing branch migration. Has replication fork regression activity, unwinds stalled or blocked replication forks to make a HJ that can be resolved. Has a DNA unwinding activity characteristic of a DNA helicase with 3'-5' polarity. Plays a role in recombination surveillance and repair of double-stranded (ds)DNA breaks in the mitochondrion. May be able to dissociate D- and R-loops. Able to complement UV sensitivity of a recG deletion in E.coli. This is ATP-dependent DNA helicase homolog RECG1, chloroplastic/mitochondrial from Arabidopsis thaliana (Mouse-ear cress).